The following is a 501-amino-acid chain: Glycerol kinase 1 (501 aa).

An ADP-binding site is contributed by Thr16. ATP is bound by residues Thr16, Thr17, and Ser18. Thr16 contacts sn-glycerol 3-phosphate. An ADP-binding site is contributed by Arg20. Residues Arg84, Glu85, Tyr135, and Asp242 each coordinate sn-glycerol 3-phosphate. Residues Arg84, Glu85, Tyr135, Asp242, and Gln243 each contribute to the glycerol site. Positions 264 and 307 each coordinate ADP. ATP is bound by residues Thr264, Gly307, Gln311, and Gly408. Gly408 contacts ADP.

This sequence belongs to the FGGY kinase family.

The catalysed reaction is glycerol + ATP = sn-glycerol 3-phosphate + ADP + H(+). It participates in polyol metabolism; glycerol degradation via glycerol kinase pathway; sn-glycerol 3-phosphate from glycerol: step 1/1. Key enzyme in the regulation of glycerol uptake and metabolism. Catalyzes the phosphorylation of glycerol to yield sn-glycerol 3-phosphate. This is Glycerol kinase 1 from Saccharolobus solfataricus (strain ATCC 35092 / DSM 1617 / JCM 11322 / P2) (Sulfolobus solfataricus).